Reading from the N-terminus, the 112-residue chain is Tyrosine-protein phosphatase 17 (112 aa).

Positions 1-112 constitute a Tyrosine-protein phosphatase domain; the sequence is WRMIWEHECC…QPHTAGPIVV (112 aa). Aspartate 82 is a binding site for substrate.

It belongs to the protein-tyrosine phosphatase family.

It catalyses the reaction O-phospho-L-tyrosyl-[protein] + H2O = L-tyrosyl-[protein] + phosphate. The polypeptide is Tyrosine-protein phosphatase 17 (STY-17) (Styela plicata (Wrinkled sea squirt)).